The primary structure comprises 162 residues: 2-amino-4-hydroxy-6-hydroxymethyldihydropteridine pyrophosphokinase (162 aa).

Belongs to the HPPK family.

It catalyses the reaction 6-hydroxymethyl-7,8-dihydropterin + ATP = (7,8-dihydropterin-6-yl)methyl diphosphate + AMP + H(+). It functions in the pathway cofactor biosynthesis; tetrahydrofolate biosynthesis; 2-amino-4-hydroxy-6-hydroxymethyl-7,8-dihydropteridine diphosphate from 7,8-dihydroneopterin triphosphate: step 4/4. Catalyzes the transfer of pyrophosphate from adenosine triphosphate (ATP) to 6-hydroxymethyl-7,8-dihydropterin, an enzymatic step in folate biosynthesis pathway. This Streptococcus pyogenes serotype M3 (strain ATCC BAA-595 / MGAS315) protein is 2-amino-4-hydroxy-6-hydroxymethyldihydropteridine pyrophosphokinase (folK).